We begin with the raw amino-acid sequence, 363 residues long: Serpentine receptor class beta-18 (363 aa).

Helical transmembrane passes span 52–72, 92–112, 135–155, 172–192, 218–238, 276–296, and 303–323; these read LAQFSHVVFSFMGLIIVVVYI, MLLFIVAHSIDMIVLHIYHII, FRYTFSFCSMGLAICTYCIYI, LILAAQICQLIVISSLIIIWV, KATIAVFPINFICFFLSIGLF, AALMALFSVASLLMRLVYNFL, and TIATLSYIMSIYCFTVPLVIV.

This sequence belongs to the nematode receptor-like protein srb family.

It is found in the membrane. The polypeptide is Serpentine receptor class beta-18 (srb-18) (Caenorhabditis elegans).